Consider the following 275-residue polypeptide: 3-methyl-2-oxobutanoate hydroxymethyltransferase (275 aa).

Residues Asp55 and Asp94 each contribute to the Mg(2+) site. 3-methyl-2-oxobutanoate-binding positions include 55-56 (DS), Asp94, and Lys122. A Mg(2+)-binding site is contributed by Glu124. Residue Glu191 is the Proton acceptor of the active site.

The protein belongs to the PanB family. As to quaternary structure, homodecamer; pentamer of dimers. Requires Mg(2+) as cofactor.

It localises to the cytoplasm. The enzyme catalyses 3-methyl-2-oxobutanoate + (6R)-5,10-methylene-5,6,7,8-tetrahydrofolate + H2O = 2-dehydropantoate + (6S)-5,6,7,8-tetrahydrofolate. Its pathway is cofactor biosynthesis; (R)-pantothenate biosynthesis; (R)-pantoate from 3-methyl-2-oxobutanoate: step 1/2. Functionally, catalyzes the reversible reaction in which hydroxymethyl group from 5,10-methylenetetrahydrofolate is transferred onto alpha-ketoisovalerate to form ketopantoate. The sequence is that of 3-methyl-2-oxobutanoate hydroxymethyltransferase from Marinomonas sp. (strain MWYL1).